The sequence spans 239 residues: Large ribosomal subunit protein uL2 (239 aa).

This sequence belongs to the universal ribosomal protein uL2 family.

Its subcellular location is the cytoplasm. The chain is Large ribosomal subunit protein uL2 (RPL8) from Encephalitozoon cuniculi (strain GB-M1) (Microsporidian parasite).